The following is a 32-amino-acid chain: MSDIN-like toxin proprotein 2 (32 aa).

The propeptide occupies 1–10 (MSDINATRLP). The segment at residues 11–17 (HLVRYPP) is a cross-link (cyclopeptide (His-Pro)). Residues 18 to 32 (YVGDGTDLTLNRGEK) constitute a propeptide that is removed on maturation.

The protein belongs to the MSDIN fungal toxin family. Processed by the macrocyclase-peptidase enzyme POPB to yield a toxic cyclic heptapeptide. POPB first removes 10 residues from the N-terminus. Conformational trapping of the remaining peptide forces the enzyme to release this intermediate rather than proceed to macrocyclization. The enzyme rebinds the remaining peptide in a different conformation and catalyzes macrocyclization of the N-terminal 7 residues.

Probable toxin that belongs to the MSDIN-like toxin family responsible for a large number of food poisoning cases and deaths. This is MSDIN-like toxin proprotein 2 from Amanita fuligineoides.